A 1209-amino-acid polypeptide reads, in one-letter code: Zinc finger protein 804A (1209 aa).

Residues 57-81 (FYCELCDKQYYKHQEFDNHINSYDH) form a C2H2-type zinc finger. Basic and acidic residues predominate over residues 380–394 (VKHNEASTTEVENKN). Disordered stretches follow at residues 380-401 (VKHNEASTTEVENKNGPETLAP) and 792-860 (PEEF…MKPQ). Residues 807 to 819 (KPKKKRRRKRGRF) are compositionally biased toward basic residues. Basic and acidic residues-rich tracts occupy residues 826–836 (LELKENTDYPV) and 848–860 (LISEDKKEKMKPQ).

This is Zinc finger protein 804A (ZNF804A) from Homo sapiens (Human).